A 145-amino-acid polypeptide reads, in one-letter code: Large ribosomal subunit protein uL13 (145 aa).

The protein belongs to the universal ribosomal protein uL13 family. In terms of assembly, part of the 50S ribosomal subunit.

Functionally, this protein is one of the early assembly proteins of the 50S ribosomal subunit, although it is not seen to bind rRNA by itself. It is important during the early stages of 50S assembly. The protein is Large ribosomal subunit protein uL13 of Bacillus thuringiensis (strain Al Hakam).